Reading from the N-terminus, the 401-residue chain is Probable tRNA sulfurtransferase (401 aa).

The 106-residue stretch at Thr63–Arg168 folds into the THUMP domain. ATP is bound by residues Leu186–Leu187, Tyr211–Phe212, Arg268, Gly290, and Gln299.

It belongs to the ThiI family.

Its subcellular location is the cytoplasm. It carries out the reaction [ThiI sulfur-carrier protein]-S-sulfanyl-L-cysteine + a uridine in tRNA + 2 reduced [2Fe-2S]-[ferredoxin] + ATP + H(+) = [ThiI sulfur-carrier protein]-L-cysteine + a 4-thiouridine in tRNA + 2 oxidized [2Fe-2S]-[ferredoxin] + AMP + diphosphate. It catalyses the reaction [ThiS sulfur-carrier protein]-C-terminal Gly-Gly-AMP + S-sulfanyl-L-cysteinyl-[cysteine desulfurase] + AH2 = [ThiS sulfur-carrier protein]-C-terminal-Gly-aminoethanethioate + L-cysteinyl-[cysteine desulfurase] + A + AMP + 2 H(+). Its pathway is cofactor biosynthesis; thiamine diphosphate biosynthesis. In terms of biological role, catalyzes the ATP-dependent transfer of a sulfur to tRNA to produce 4-thiouridine in position 8 of tRNAs, which functions as a near-UV photosensor. Also catalyzes the transfer of sulfur to the sulfur carrier protein ThiS, forming ThiS-thiocarboxylate. This is a step in the synthesis of thiazole, in the thiamine biosynthesis pathway. The sulfur is donated as persulfide by IscS. This Treponema pallidum (strain Nichols) protein is Probable tRNA sulfurtransferase.